We begin with the raw amino-acid sequence, 222 residues long: Coiled-coil domain-containing protein 43 (222 aa).

A Glycyl lysine isopeptide (Lys-Gly) (interchain with G-Cter in SUMO1) cross-link involves residue K93. A coiled-coil region spans residues S119 to A143. Residues V136–R222 form a disordered region. T137 carries the phosphothreonine modification. The span at S152 to V168 shows a compositional bias: polar residues. Residues L172–E209 are compositionally biased toward basic and acidic residues. Residues R175–K217 are a coiled coil. The span at K210–R222 shows a compositional bias: basic residues.

It belongs to the CCDC43 family.

This chain is Coiled-coil domain-containing protein 43 (Ccdc43), found in Mus musculus (Mouse).